A 112-amino-acid polypeptide reads, in one-letter code: Tyrosine-protein phosphatase 8 (112 aa).

The 112-residue stretch at 1–112 (ENSTAIVMIT…ANSEYGPVVV (112 aa)) folds into the Tyrosine-protein phosphatase domain.

Belongs to the protein-tyrosine phosphatase family.

The catalysed reaction is O-phospho-L-tyrosyl-[protein] + H2O = L-tyrosyl-[protein] + phosphate. The chain is Tyrosine-protein phosphatase 8 (STY-8) from Styela plicata (Wrinkled sea squirt).